The primary structure comprises 206 residues: Dephospho-CoA kinase (206 aa).

The DPCK domain maps to 6-206 (IIGLTGGIAS…KWKWKDWSKK (201 aa)). 14–19 (ASGKST) is a binding site for ATP.

The protein belongs to the CoaE family.

Its subcellular location is the cytoplasm. The enzyme catalyses 3'-dephospho-CoA + ATP = ADP + CoA + H(+). The protein operates within cofactor biosynthesis; coenzyme A biosynthesis; CoA from (R)-pantothenate: step 5/5. In terms of biological role, catalyzes the phosphorylation of the 3'-hydroxyl group of dephosphocoenzyme A to form coenzyme A. The protein is Dephospho-CoA kinase of Carboxydothermus hydrogenoformans (strain ATCC BAA-161 / DSM 6008 / Z-2901).